The following is a 100-amino-acid chain: NADH-quinone oxidoreductase subunit K (100 aa).

3 helical membrane passes run 4–24 (VTWY…GVLL), 29–49 (LIVM…FLAF), and 61–81 (IAFF…AVVI).

The protein belongs to the complex I subunit 4L family. As to quaternary structure, NDH-1 is composed of 14 different subunits. Subunits NuoA, H, J, K, L, M, N constitute the membrane sector of the complex.

Its subcellular location is the cell inner membrane. The catalysed reaction is a quinone + NADH + 5 H(+)(in) = a quinol + NAD(+) + 4 H(+)(out). In terms of biological role, NDH-1 shuttles electrons from NADH, via FMN and iron-sulfur (Fe-S) centers, to quinones in the respiratory chain. The immediate electron acceptor for the enzyme in this species is believed to be ubiquinone. Couples the redox reaction to proton translocation (for every two electrons transferred, four hydrogen ions are translocated across the cytoplasmic membrane), and thus conserves the redox energy in a proton gradient. This is NADH-quinone oxidoreductase subunit K from Anaeromyxobacter sp. (strain Fw109-5).